A 660-amino-acid polypeptide reads, in one-letter code: Bifunctional polymyxin resistance protein ArnA (660 aa).

Residues 1–304 (MKAVVFAYHD…TLGLVAGARL (304 aa)) are formyltransferase ArnAFT. Catalysis depends on His-104, which acts as the Proton donor; for formyltransferase activity. (6R)-10-formyltetrahydrofolate is bound by residues Arg-114 and 136–140 (VKRAD). The interval 314-660 (RRTRVLILGV…QSVEPGDAEE (347 aa)) is dehydrogenase ArnADH. NAD(+) contacts are provided by residues Asp-347 and 368–369 (DI). UDP-alpha-D-glucuronate is bound by residues Ala-393, Tyr-398, and 432 to 433 (TS). Glu-434 acts as the Proton acceptor; for decarboxylase activity in catalysis. Residues Arg-460, Asn-492, 526–535 (KLIDGGRQKR), and Tyr-613 contribute to the UDP-alpha-D-glucuronate site. The active-site Proton donor; for decarboxylase activity is Arg-619.

This sequence in the N-terminal section; belongs to the Fmt family. UDP-L-Ara4N formyltransferase subfamily. The protein in the C-terminal section; belongs to the NAD(P)-dependent epimerase/dehydratase family. UDP-glucuronic acid decarboxylase subfamily. Homohexamer, formed by a dimer of trimers.

The enzyme catalyses UDP-alpha-D-glucuronate + NAD(+) = UDP-beta-L-threo-pentopyranos-4-ulose + CO2 + NADH. It carries out the reaction UDP-4-amino-4-deoxy-beta-L-arabinose + (6R)-10-formyltetrahydrofolate = UDP-4-deoxy-4-formamido-beta-L-arabinose + (6S)-5,6,7,8-tetrahydrofolate + H(+). It participates in nucleotide-sugar biosynthesis; UDP-4-deoxy-4-formamido-beta-L-arabinose biosynthesis; UDP-4-deoxy-4-formamido-beta-L-arabinose from UDP-alpha-D-glucuronate: step 1/3. It functions in the pathway nucleotide-sugar biosynthesis; UDP-4-deoxy-4-formamido-beta-L-arabinose biosynthesis; UDP-4-deoxy-4-formamido-beta-L-arabinose from UDP-alpha-D-glucuronate: step 3/3. The protein operates within bacterial outer membrane biogenesis; lipopolysaccharide biosynthesis. Functionally, bifunctional enzyme that catalyzes the oxidative decarboxylation of UDP-glucuronic acid (UDP-GlcUA) to UDP-4-keto-arabinose (UDP-Ara4O) and the addition of a formyl group to UDP-4-amino-4-deoxy-L-arabinose (UDP-L-Ara4N) to form UDP-L-4-formamido-arabinose (UDP-L-Ara4FN). The modified arabinose is attached to lipid A and is required for resistance to polymyxin and cationic antimicrobial peptides. This is Bifunctional polymyxin resistance protein ArnA from Erwinia tasmaniensis (strain DSM 17950 / CFBP 7177 / CIP 109463 / NCPPB 4357 / Et1/99).